The sequence spans 340 residues: Dihydroorotate dehydrogenase (quinone) (340 aa).

Residues 61–65 (AGLDK) and Thr-85 contribute to the FMN site. Lys-65 is a substrate binding site. 110–114 (NRMGF) lines the substrate pocket. FMN is bound by residues Asn-138 and Asn-171. Residue Asn-171 coordinates substrate. Ser-174 (nucleophile) is an active-site residue. Asn-176 contributes to the substrate binding site. FMN is bound by residues Lys-216 and Thr-244. A substrate-binding site is contributed by 245–246 (NT). Residues Gly-267, Gly-296, and 317 to 318 (YT) contribute to the FMN site.

The protein belongs to the dihydroorotate dehydrogenase family. Type 2 subfamily. As to quaternary structure, monomer. Requires FMN as cofactor.

The protein resides in the cell membrane. It catalyses the reaction (S)-dihydroorotate + a quinone = orotate + a quinol. The protein operates within pyrimidine metabolism; UMP biosynthesis via de novo pathway; orotate from (S)-dihydroorotate (quinone route): step 1/1. Catalyzes the conversion of dihydroorotate to orotate with quinone as electron acceptor. This Marinobacter nauticus (strain ATCC 700491 / DSM 11845 / VT8) (Marinobacter aquaeolei) protein is Dihydroorotate dehydrogenase (quinone).